Here is a 264-residue protein sequence, read N- to C-terminus: MVKSHIGSWILVLFVAMWSDVGLCKKRPKPGGGWNTGGSRYPGQGSPGGNRYPPQGGGGWGQPHGGGWGQPHGGGWGQPHGGGWGQPHGGGWGQPHGGGGWGQGGTHGQWNKPSKPKTNMKHVAGAAAAGAVVGGLGGYMLGSAMSRPLIHFGSDYEDRYYRENMHRYPNQVYYRPVDQYSNQNNFVHDCVNITVKEHTVTTTTKGENFTETDIKMMERVVEQMCITQYQRESQAYYQRGASVILFSSPPVILLISFLIFLIVG.

Residues 1–24 (MVKSHIGSWILVLFVAMWSDVGLC) form the signal peptide. Residues 25-41 (KKRPKPGGGWNTGGSRY) are interaction with ADGRG6. Residues 25-241 (KKRPKPGGGW…ESQAYYQRGA (217 aa)) are interaction with GRB2, ERI3 and SYN1. Residues 28-119 (PKPGGGWNTG…WNKPSKPKTN (92 aa)) are disordered. Repeat copies occupy residues 54–62 (PQGGGGWGQ), 63–70 (PHGGGWGQ), 71–78 (PHGGGWGQ), 79–86 (PHGGGWGQ), 87–94 (PHGGGWGQ), and 95–103 (PHGGGGWGQ). The 6 X 8 AA tandem repeats of P-H-G-G-G-W-G-Q stretch occupies residues 54–103 (PQGGGGWGQPHGGGWGQPHGGGWGQPHGGGWGQPHGGGWGQPHGGGGWGQ). Residues 55–107 (QGGGGWGQPHGGGWGQPHGGGWGQPHGGGWGQPHGGGWGQPHGGGGWGQGGTH) are compositionally biased toward gly residues. 12 residues coordinate Cu(2+): histidine 72, glycine 73, glycine 74, histidine 80, glycine 81, glycine 82, histidine 88, glycine 89, glycine 90, histidine 96, glycine 98, and glycine 99. Cysteine 190 and cysteine 225 are oxidised to a cystine. N-linked (GlcNAc...) asparagine glycosylation is found at asparagine 192 and asparagine 208. Alanine 241 is lipidated: GPI-anchor amidated alanine. Residues 242-264 (SVILFSSPPVILLISFLIFLIVG) constitute a propeptide, removed in mature form.

It belongs to the prion family. In terms of assembly, monomer and homodimer. Has a tendency to aggregate into amyloid fibrils containing a cross-beta spine, formed by a steric zipper of superposed beta-strands. Soluble oligomers may represent an intermediate stage on the path to fibril formation. Copper binding may promote oligomerization. Interacts with GRB2, APP, ERI3/PRNPIP and SYN1. Mislocalized cytosolically exposed PrP interacts with MGRN1; this interaction alters MGRN1 subcellular location and causes lysosomal enlargement. Interacts with APP. Interacts with KIAA1191. Interacts with ADGRG6.

The protein localises to the cell membrane. The protein resides in the golgi apparatus. In terms of biological role, its primary physiological function is unclear. May play a role in neuronal development and synaptic plasticity. May be required for neuronal myelin sheath maintenance. May promote myelin homeostasis through acting as an agonist for ADGRG6 receptor. May play a role in iron uptake and iron homeostasis. Soluble oligomers are toxic to cultured neuroblastoma cells and induce apoptosis (in vitro). Association with GPC1 (via its heparan sulfate chains) targets PRNP to lipid rafts. Also provides Cu(2+) or Zn(2+) for the ascorbate-mediated GPC1 deaminase degradation of its heparan sulfate side chains. This Bos indicus x Bos taurus (Hybrid cattle) protein is Major prion protein (PRNP).